Here is a 158-residue protein sequence, read N- to C-terminus: Protein Smg homolog (158 aa).

It belongs to the Smg family.

The polypeptide is Protein Smg homolog (Herminiimonas arsenicoxydans).